Reading from the N-terminus, the 412-residue chain is Major facilitator superfamily domain-containing protein 3 (412 aa).

12 helical membrane passes run 10-30, 40-60, 68-88, 99-119, 152-172, 173-193, 204-224, 252-272, 291-311, 320-340, 361-381, and 384-404; these read GLYL…PILL, VGLT…APLV, VWLT…AVLP, TTVM…DVAL, GGLL…LLAA, TYWL…LPWP, YLLQ…FVLT, LWSG…GGAL, LGSL…GASV, AVLL…TATF, FLAT…GVLA, and LGPH…VLDL.

This sequence belongs to the major facilitator superfamily. As to expression, in brain, expressed in the cortex, striatum, hippocampus, hypothalamus, thalamus and cerebellum (at protein level). Widely expressed with highest levels in kidney and liver.

The protein resides in the membrane. The sequence is that of Major facilitator superfamily domain-containing protein 3 (Mfsd3) from Mus musculus (Mouse).